We begin with the raw amino-acid sequence, 652 residues long: Transmembrane 9 superfamily member 12 (652 aa).

A signal peptide spans 1 to 20; it reads MFGVYRVFVLLVFVSQLCNG. Over 21–286 the chain is Lumenal; it reads FYLPGSYMHT…LKMEGARVHW (266 aa). The chain crosses the membrane as a helical span at residues 287–307; the sequence is FSILNSLMVIFFLAGIVFVIF. At 308–362 the chain is on the cytoplasmic side; the sequence is LRTVRRDLTKYEELDKEAQAQMNEELSGWKLVVGDVFREPEMSKLLCIMVGDGVR. A helical transmembrane segment spans residues 363–383; sequence ITGMAVVTIVFAALGFMSPAS. Over 384–386 the chain is Lumenal; that stretch reads RGM. The chain crosses the membrane as a helical span at residues 387-407; sequence LLTGMIILYLFLGIVAGYAGV. The Cytoplasmic segment spans residues 408 to 426; it reads RLWRTVKGTSEGWRSLSWS. A helical membrane pass occupies residues 427-447; sequence IACFFPGIAFVILTVLNFLLW. Residues 448–460 are Lumenal-facing; sequence SSNSTGAIPISLY. Residues 461-481 form a helical membrane-spanning segment; sequence FELLALWFCISVPLTLFGGFL. The Cytoplasmic portion of the chain corresponds to 482–510; it reads GTRAEAIQFPVRTNQIPREIPERKYPSWL. Residues 511-531 form a helical membrane-spanning segment; the sequence is LVLGAGTLPFGTLFIELFFIF. The Lumenal segment spans residues 532–541; sequence SSIWLGRFYY. The chain crosses the membrane as a helical span at residues 542–562; that stretch reads VFGFLLIVLLLLVVVCAEVSV. Residues 563–580 are Cytoplasmic-facing; the sequence is VLTYMHLCVEDWRWWWKA. The helical transmembrane segment at 581 to 601 threads the bilayer; that stretch reads FYASGSVALYVFAYSINYLVF. Residues 602–613 are Lumenal-facing; sequence DLQSLSGPVSAM. Residues 614–634 traverse the membrane as a helical segment; that stretch reads LYIGYSLLMAIAIMLATGTIG. The Cytoplasmic portion of the chain corresponds to 635-652; it reads FLTSFYFVHYLFSSVKID. An Endoplasmic reticulum export signal motif is present at residues 641–646; sequence FVHYLF. Residues 650-652 carry the Golgi retention signal motif; the sequence is KID.

Belongs to the nonaspanin (TM9SF) (TC 9.A.2) family.

The protein resides in the endosome membrane. The protein localises to the golgi apparatus membrane. This Arabidopsis thaliana (Mouse-ear cress) protein is Transmembrane 9 superfamily member 12.